Here is a 420-residue protein sequence, read N- to C-terminus: 3-oxo-tetronate kinase (420 aa).

Residues serine 258, 360 to 363 (GGET), and glycine 403 each bind ATP.

It belongs to the four-carbon acid sugar kinase family.

It catalyses the reaction 3-dehydro-L-erythronate + ATP = 3-dehydro-4-O-phospho-L-erythronate + ADP + H(+). It carries out the reaction 3-dehydro-D-erythronate + ATP = 3-dehydro-4-O-phospho-D-erythronate + ADP + H(+). Its function is as follows. Catalyzes the ATP-dependent phosphorylation of 3-oxo-tetronate to 3-oxo-tetronate 4-phosphate. The chain is 3-oxo-tetronate kinase from Salmonella typhimurium (strain LT2 / SGSC1412 / ATCC 700720).